The following is a 152-amino-acid chain: Ubiquitin-conjugating enzyme E2 B (152 aa).

The UBC core domain maps to 4–150; sequence PARRRLMRDF…VSAIVEQSWN (147 aa). Catalysis depends on C88, which acts as the Glycyl thioester intermediate.

It belongs to the ubiquitin-conjugating enzyme family. Interacts with RAD18, UBR2 and WAC.

It localises to the cell membrane. The protein localises to the nucleus. The enzyme catalyses S-ubiquitinyl-[E1 ubiquitin-activating enzyme]-L-cysteine + [E2 ubiquitin-conjugating enzyme]-L-cysteine = [E1 ubiquitin-activating enzyme]-L-cysteine + S-ubiquitinyl-[E2 ubiquitin-conjugating enzyme]-L-cysteine.. It functions in the pathway protein modification; protein ubiquitination. In terms of biological role, E2 ubiquitin-conjugating enzyme that accepts ubiquitin from the ubiquitin-activating enzyme E1 and transfers it to a E3 ubiquitin-protein ligase. In vitro catalyzes 'Lys-11'-, as well as 'Lys-48'- and 'Lys-63'-linked polyubiquitination. Together with the E3 enzyme BRE1 (RNF20 and/or RNF40), plays a role in transcription regulation by catalyzing the monoubiquitination of histone H2B at 'Lys-120' to form H2BK120ub1. H2BK120ub1 gives a specific tag for epigenetic transcriptional activation, elongation by RNA polymerase II, telomeric silencing, and is also a prerequisite for H3K4me and H3K79me formation. May play a role in DNA repair. Associates to the E3 ligase RAD18 to form the UBE2B-RAD18 ubiquitin ligase complex involved in mono-ubiquitination of DNA-associated PCNA on 'Lys-164'. In association with the E3 enzyme UBR4, is involved in N-end rule-dependent protein degradation. May be involved in neurite outgrowth. The protein is Ubiquitin-conjugating enzyme E2 B (UBE2B) of Bos taurus (Bovine).